A 339-amino-acid chain; its full sequence is Anthranilate phosphoribosyltransferase (339 aa).

5-phospho-alpha-D-ribose 1-diphosphate contacts are provided by residues G80, G83–D84, T88, N90–T93, K108–S116, and S120. G80 contacts anthranilate. Residue S92 participates in Mg(2+) binding. Residue N111 participates in anthranilate binding. R166 serves as a coordination point for anthranilate. Mg(2+) contacts are provided by D225 and E226.

It belongs to the anthranilate phosphoribosyltransferase family. As to quaternary structure, homodimer. It depends on Mg(2+) as a cofactor.

The catalysed reaction is N-(5-phospho-beta-D-ribosyl)anthranilate + diphosphate = 5-phospho-alpha-D-ribose 1-diphosphate + anthranilate. The protein operates within amino-acid biosynthesis; L-tryptophan biosynthesis; L-tryptophan from chorismate: step 2/5. In terms of biological role, catalyzes the transfer of the phosphoribosyl group of 5-phosphorylribose-1-pyrophosphate (PRPP) to anthranilate to yield N-(5'-phosphoribosyl)-anthranilate (PRA). The sequence is that of Anthranilate phosphoribosyltransferase from Caldanaerobacter subterraneus subsp. tengcongensis (strain DSM 15242 / JCM 11007 / NBRC 100824 / MB4) (Thermoanaerobacter tengcongensis).